We begin with the raw amino-acid sequence, 842 residues long: Pentatricopeptide repeat-containing protein At3g22690 (842 aa).

PPR repeat units lie at residues 98–132 (TCFM…GISP), 133–167 (DKYT…GYAK), 168–202 (DLFV…NVVS), 203–234 (WTSM…EVTP), 235–269 (NSVT…GIEV), 270–300 (NDLM…YGAS), 301–335 (NLDL…GVRP), 336–370 (DRIS…GFES), 371–401 (WDNI…MSNK), 402–436 (TVVT…NIVS), 437–463 (WNTI…MQSQ), 469–503 (DGVT…GIQL), 504–534 (DVRL…LTNR), 535–569 (DVSA…GLKP), 570–605 (DGVA…GVSP), and 606–636 (EDVH…MPME). The segment at 641–716 (IWNSLLAACR…PPGTSSIQIR (76 aa)) is type E motif. Residues 717–747 (GKTHEFTSGDESHPEMPNIEAMLDEVSQRAS) are type E(+) motif. The segment at 748-842 (HLGHVPDLSN…QGKCSCGDFW (95 aa)) is type DYW motif.

It belongs to the PPR family. PCMP-H subfamily.

The polypeptide is Pentatricopeptide repeat-containing protein At3g22690 (PCMP-H56) (Arabidopsis thaliana (Mouse-ear cress)).